The chain runs to 335 residues: Tryptophan--tRNA ligase (335 aa).

ATP is bound by residues 11–13 (QPT) and 19–20 (GN). A 'HIGH' region motif is present at residues 12–20 (PTGNLHLGN). An L-tryptophan-binding site is contributed by aspartate 135. Residues 147–149 (GED), valine 189, and 198–202 (KMSKS) contribute to the ATP site. Residues 198 to 202 (KMSKS) carry the 'KMSKS' region motif.

Belongs to the class-I aminoacyl-tRNA synthetase family. As to quaternary structure, homodimer.

Its subcellular location is the cytoplasm. It catalyses the reaction tRNA(Trp) + L-tryptophan + ATP = L-tryptophyl-tRNA(Trp) + AMP + diphosphate + H(+). Its function is as follows. Catalyzes the attachment of tryptophan to tRNA(Trp). This Nostoc sp. (strain PCC 7120 / SAG 25.82 / UTEX 2576) protein is Tryptophan--tRNA ligase.